Consider the following 106-residue polypeptide: UPF0145 protein Fphi_1781 (106 aa).

This sequence belongs to the UPF0145 family.

In Francisella philomiragia subsp. philomiragia (strain ATCC 25017 / CCUG 19701 / FSC 153 / O#319-036), this protein is UPF0145 protein Fphi_1781.